Reading from the N-terminus, the 347-residue chain is Phosphate acyltransferase (347 aa).

Belongs to the PlsX family. In terms of assembly, homodimer. Probably interacts with PlsY.

The protein resides in the cytoplasm. It carries out the reaction a fatty acyl-[ACP] + phosphate = an acyl phosphate + holo-[ACP]. The protein operates within lipid metabolism; phospholipid metabolism. Catalyzes the reversible formation of acyl-phosphate (acyl-PO(4)) from acyl-[acyl-carrier-protein] (acyl-ACP). This enzyme utilizes acyl-ACP as fatty acyl donor, but not acyl-CoA. This Sinorhizobium medicae (strain WSM419) (Ensifer medicae) protein is Phosphate acyltransferase.